The following is a 331-amino-acid chain: Centriolar satellite-associated tubulin polyglutamylase complex regulator 1 (331 aa).

The required for interaction with PCM1 stretch occupies residues 1–111; that stretch reads MLSPERLALP…HCLLQLLCPD (111 aa). Positions 1-225 are required for interaction with TPGS1, LRRC49, and TTLL1; that stretch reads MLSPERLALP…SCPPPALVKE (225 aa). Positions 112 to 331 are required for interaction with TPGS2; it reads FPLELTQKAA…STEETDESET (220 aa). Positions 292–331 are disordered; that stretch reads SCLPSRTPPRVGSPWKPLHRSRKLDAESDGSTEETDESET. Residues 318 to 331 show a composition bias toward acidic residues; that stretch reads ESDGSTEETDESET. S319 is modified (phosphoserine).

This sequence belongs to the CSTPP1 family. As to quaternary structure, interacts with PCM1. Interacts with TTLL1, TPGS1, TPGS2 and LRRC49; the interactions link CSTPP1 to the complex TPGC. Binds to alpha-tubulin.

It localises to the cytoplasm. The protein resides in the cytoskeleton. It is found in the microtubule organizing center. The protein localises to the centrosome. Its subcellular location is the centriolar satellite. Its function is as follows. Regulator of the tubulin polyglutamylase complex (TPGC) that controls cytoskeletal organization, nuclear shape, and cilium disassembly by balancing microtubule and actin assembly. Regulates the assembly and stability of the TPGC and thereby modulates polyglutamylation of the microtubule, which antagonizes MAP4 binding. The sequence is that of Centriolar satellite-associated tubulin polyglutamylase complex regulator 1 from Mus musculus (Mouse).